The primary structure comprises 270 residues: Flagellar hook-basal body complex protein FlhO (270 aa).

The protein belongs to the flagella basal body rod proteins family.

In terms of biological role, not required for motility. This chain is Flagellar hook-basal body complex protein FlhO (flhO), found in Bacillus subtilis (strain 168).